A 188-amino-acid chain; its full sequence is Elongation factor P (188 aa).

The residue at position 34 (K34) is an N6-(3,6-diaminohexanoyl)-5-hydroxylysine.

Belongs to the elongation factor P family. May be beta-lysylated on the epsilon-amino group of Lys-34 by the combined action of EpmA and EpmB, and then hydroxylated on the C5 position of the same residue by EpmC (if this protein is present). Lysylation is critical for the stimulatory effect of EF-P on peptide-bond formation. The lysylation moiety may extend toward the peptidyltransferase center and stabilize the terminal 3-CCA end of the tRNA. Hydroxylation of the C5 position on Lys-34 may allow additional potential stabilizing hydrogen-bond interactions with the P-tRNA.

The protein resides in the cytoplasm. Its pathway is protein biosynthesis; polypeptide chain elongation. In terms of biological role, involved in peptide bond synthesis. Alleviates ribosome stalling that occurs when 3 or more consecutive Pro residues or the sequence PPG is present in a protein, possibly by augmenting the peptidyl transferase activity of the ribosome. Modification of Lys-34 is required for alleviation. This is Elongation factor P from Enterobacter sp. (strain 638).